Here is a 294-residue protein sequence, read N- to C-terminus: tRNA pseudouridine synthase B (294 aa).

Aspartate 39 serves as the catalytic Nucleophile.

This sequence belongs to the pseudouridine synthase TruB family. Type 1 subfamily.

The catalysed reaction is uridine(55) in tRNA = pseudouridine(55) in tRNA. Responsible for synthesis of pseudouridine from uracil-55 in the psi GC loop of transfer RNAs. In Streptococcus pyogenes serotype M5 (strain Manfredo), this protein is tRNA pseudouridine synthase B.